The primary structure comprises 895 residues: Procollagen lysyl hydroxylase and glycosyltransferase (895 aa).

Residues 1-194 are lysyl hydroxylase region; the sequence is MISRTYVINL…PSDEFIPIMH (194 aa). Residues 537–895 form a glucosyl transferase region region; that stretch reads YYFYISGDCI…KRYILVSFVN (359 aa). Positions 805–895 constitute a Fe2OG dioxygenase domain; sequence DINLAFVVKY…KRYILVSFVN (91 aa). Histidine 825, aspartate 827, and histidine 877 together coordinate Fe cation. Arginine 887 is a catalytic residue.

The cofactor is Fe cation. Requires L-ascorbate as cofactor.

It carries out the reaction L-lysyl-[collagen] + 2-oxoglutarate + O2 = (5R)-5-hydroxy-L-lysyl-[collagen] + succinate + CO2. Functionally, displays two enzymatic activities involved in procollagen processing. Forms hydroxylysine residues in -Xaa-Lys-Gly- sequences in collagens. These hydroxylysines are subsequentially glucosylated by a glucosyltransferase activity. Collagen post-translationally modified is detected in mimivirus virion. This Acanthamoeba polyphaga (Amoeba) protein is Procollagen lysyl hydroxylase and glycosyltransferase.